The chain runs to 202 residues: Holliday junction resolvase RecU (202 aa).

Threonine 85, aspartate 87, glutamate 100, and glutamine 119 together coordinate Mg(2+).

It belongs to the RecU family. Mg(2+) serves as cofactor.

Its subcellular location is the cytoplasm. The enzyme catalyses Endonucleolytic cleavage at a junction such as a reciprocal single-stranded crossover between two homologous DNA duplexes (Holliday junction).. In terms of biological role, endonuclease that resolves Holliday junction intermediates in genetic recombination. Cleaves mobile four-strand junctions by introducing symmetrical nicks in paired strands. Promotes annealing of linear ssDNA with homologous dsDNA. Required for DNA repair, homologous recombination and chromosome segregation. The chain is Holliday junction resolvase RecU from Streptococcus uberis (strain ATCC BAA-854 / 0140J).